A 102-amino-acid chain; its full sequence is Small ribosomal subunit protein uS10 (102 aa).

The protein belongs to the universal ribosomal protein uS10 family. As to quaternary structure, part of the 30S ribosomal subunit.

Its function is as follows. Involved in the binding of tRNA to the ribosomes. The polypeptide is Small ribosomal subunit protein uS10 (Syntrophotalea carbinolica (strain DSM 2380 / NBRC 103641 / GraBd1) (Pelobacter carbinolicus)).